The chain runs to 178 residues: Cytidylate kinase (178 aa).

G7–T15 is a binding site for ATP.

This sequence belongs to the cytidylate kinase family. Type 2 subfamily.

It localises to the cytoplasm. The catalysed reaction is CMP + ATP = CDP + ADP. It carries out the reaction dCMP + ATP = dCDP + ADP. The sequence is that of Cytidylate kinase from Methanococcus maripaludis (strain DSM 14266 / JCM 13030 / NBRC 101832 / S2 / LL).